Consider the following 1245-residue polypeptide: Nidogen-1 (1245 aa).

An N-terminal signal peptide occupies residues 1–28 (MLDASGCSWAMWTWALLQLLLLVGPGGC). Residues 106–268 (PFLADLDTTD…GVWVFEIGSP (163 aa)) enclose the NIDO domain. Asn187 is a glycosylation site (N-linked (GlcNAc...) asparagine). Sulfotyrosine is present on residues Tyr290 and Tyr295. Thr299 carries an O-linked (GalNAc...) threonine glycan. The interval 307–344 (VATPSPSHSPRRGYPDPHNVPRILSPGYEATERPRGVP) is disordered. O-linked (GalNAc...) serine glycosylation is present at Ser331. O-linked (GalNAc...) threonine glycosylation is found at Thr337 and Thr345. Residue Thr348 is glycosylated (O-linked (GalNAc...) threonine; partial). Residues 384-424 (SQQTCANNRHQCSVHAECRDYATGFCCRCVANYTGNGRQCV) form the EGF-like 1 domain. Intrachain disulfides connect Cys388–Cys401, Cys395–Cys410, Cys409–Cys616, Cys412–Cys423, Cys670–Cys683, Cys677–Cys693, Cys695–Cys706, Cys712–Cys725, Cys719–Cys734, Cys736–Cys748, Cys760–Cys775, Cys767–Cys785, Cys787–Cys798, Cys804–Cys815, Cys809–Cys824, Cys826–Cys837, Cys847–Cys876, Cys887–Cys894, and Cys896–Cys917. Residue Asn415 is glycosylated (N-linked (GlcNAc...) asparagine). In terms of domain architecture, Nidogen G2 beta-barrel spans 428–665 (SPQRVNGKVK…GPVRDGSPDA (238 aa)). An EGF-like 2 domain is found at 666-707 (LQNPCYIGTHGCDSNAACRPGPGTQFTCECSIGFRGDGQTCY). A Cell attachment site motif is present at residues 700-702 (RGD). In terms of domain architecture, EGF-like 3; calcium-binding spans 708–749 (DIDECSEQPSRCGNHAVCNNLPGTFRCECVEGYHFSDRGTCV). The region spanning 756–799 (PINYCETGLHNCDIPQRAQCIYMGGSSYTCSCLPGFSGDGRACR) is the EGF-like 4 domain. Residues 800–838 (DVDECQHSRCHPDAFCYNTPGSFTCQCKPGYQGDGFRCM) form the EGF-like 5; calcium-binding domain. The Thyroglobulin type-1 domain maps to 844–917 (KTRCQLEREH…RTPPGMRPPC (74 aa)). O-linked (GalNAc...) threonine glycans are attached at residues Thr920 and Thr933. LDL-receptor class B repeat units lie at residues 988–1030 (KVVY…DHLG), 1031–1073 (RTIF…DPVR), 1074–1118 (GNLY…DAFS), and 1119–1160 (SQLC…YGKN). Residues 1206–1242 (GHNYCSVNNGGCTHLCLPTPGSRTCRCPDNTLGVDCI) enclose the EGF-like 6 domain. Intrachain disulfides connect Cys1210–Cys1221, Cys1217–Cys1230, and Cys1232–Cys1241.

In terms of assembly, interacts with FBLN1. Interacts with LGALS3BP. Interacts with PLXDC1. Interacts with SVEP1. N- and O-glycosylated.

It localises to the secreted. The protein resides in the extracellular space. Its subcellular location is the extracellular matrix. The protein localises to the basement membrane. Functionally, sulfated glycoprotein widely distributed in basement membranes and tightly associated with laminin. Also binds to collagen IV and perlecan. It probably has a role in cell-extracellular matrix interactions. In Mus musculus (Mouse), this protein is Nidogen-1 (Nid1).